The chain runs to 72 residues: DNA-directed RNA polymerase subunit omega (72 aa).

It belongs to the RNA polymerase subunit omega family. The RNAP catalytic core consists of 2 alpha, 1 beta, 1 beta' and 1 omega subunit. When a sigma factor is associated with the core the holoenzyme is formed, which can initiate transcription.

It carries out the reaction RNA(n) + a ribonucleoside 5'-triphosphate = RNA(n+1) + diphosphate. Functionally, promotes RNA polymerase assembly. Latches the N- and C-terminal regions of the beta' subunit thereby facilitating its interaction with the beta and alpha subunits. The polypeptide is DNA-directed RNA polymerase subunit omega (Clostridium kluyveri (strain NBRC 12016)).